The chain runs to 525 residues: GMP synthase [glutamine-hydrolyzing] (525 aa).

The 199-residue stretch at 9–207 (RILILDFGSQ…ILDICGCEAL (199 aa)) folds into the Glutamine amidotransferase type-1 domain. Residue cysteine 86 is the Nucleophile of the active site. Catalysis depends on residues histidine 181 and glutamate 183. The GMPS ATP-PPase domain occupies 208 to 400 (WTPSKIAEDA…LGLPYDMVYR (193 aa)). 235 to 241 (SGGVDSS) is a binding site for ATP.

Homodimer.

It catalyses the reaction XMP + L-glutamine + ATP + H2O = GMP + L-glutamate + AMP + diphosphate + 2 H(+). The protein operates within purine metabolism; GMP biosynthesis; GMP from XMP (L-Gln route): step 1/1. In terms of biological role, catalyzes the synthesis of GMP from XMP. This Pseudomonas savastanoi pv. phaseolicola (strain 1448A / Race 6) (Pseudomonas syringae pv. phaseolicola (strain 1448A / Race 6)) protein is GMP synthase [glutamine-hydrolyzing].